The sequence spans 302 residues: MTAALLESQLHSLPLLARGKVRDNYAVGTDRILMVASDRLSAFDVIMGEGIPGKGELLTRVALYWFDRLGHIVPNHLTGADPVSVVAPDEVDQVRGRSMLVKRLKPLPVEAVVRGYLAGSGWKEYQETRSVCGVALPSGLTNAARLPAPIFTPATKAEMGDHDINISFERMSEIIGADLAERVRAISIQLYSSAAEIALSKGIIIADTKFEFGLDEDGTLTLMDEVLTPDSSRYWPIEHYQSAYAQGRNPPSFDKQFVRDWLESVRIDGQPWNKQAPAPALPDDVIVHTAATYREALERLTA.

Belongs to the SAICAR synthetase family.

The catalysed reaction is 5-amino-1-(5-phospho-D-ribosyl)imidazole-4-carboxylate + L-aspartate + ATP = (2S)-2-[5-amino-1-(5-phospho-beta-D-ribosyl)imidazole-4-carboxamido]succinate + ADP + phosphate + 2 H(+). It participates in purine metabolism; IMP biosynthesis via de novo pathway; 5-amino-1-(5-phospho-D-ribosyl)imidazole-4-carboxamide from 5-amino-1-(5-phospho-D-ribosyl)imidazole-4-carboxylate: step 1/2. This Leptothrix cholodnii (strain ATCC 51168 / LMG 8142 / SP-6) (Leptothrix discophora (strain SP-6)) protein is Phosphoribosylaminoimidazole-succinocarboxamide synthase.